The sequence spans 176 residues: 2-oxo-4-hydroxy-4-carboxy-5-ureidoimidazoline decarboxylase (176 aa).

The active-site Proton donor; for OHCU decarboxylase activity is histidine 70. Residues proline 71, 83–87 (SQEEQ), and 118–122 (FIMAV) each bind substrate. The tract at residues 72–96 (DLGERTEMTDESQEEQASAGLDRLP) is disordered.

Belongs to the OHCU decarboxylase family.

The enzyme catalyses 5-hydroxy-2-oxo-4-ureido-2,5-dihydro-1H-imidazole-5-carboxylate + H(+) = (S)-allantoin + CO2. Its pathway is purine metabolism; urate degradation; (S)-allantoin from urate: step 3/3. Functionally, catalyzes the stereoselective decarboxylation of 2-oxo-4-hydroxy-4-carboxy-5-ureidoimidazoline (OHCU) to (S)-allantoin. This Halalkalicoccus jeotgali (strain DSM 18796 / CECT 7217 / JCM 14584 / KCTC 4019 / B3) protein is 2-oxo-4-hydroxy-4-carboxy-5-ureidoimidazoline decarboxylase.